Here is a 122-residue protein sequence, read N- to C-terminus: Ribosome-binding factor A (122 aa).

This sequence belongs to the RbfA family. Monomer. Binds 30S ribosomal subunits, but not 50S ribosomal subunits or 70S ribosomes.

It localises to the cytoplasm. One of several proteins that assist in the late maturation steps of the functional core of the 30S ribosomal subunit. Associates with free 30S ribosomal subunits (but not with 30S subunits that are part of 70S ribosomes or polysomes). Required for efficient processing of 16S rRNA. May interact with the 5'-terminal helix region of 16S rRNA. This chain is Ribosome-binding factor A, found in Albidiferax ferrireducens (strain ATCC BAA-621 / DSM 15236 / T118) (Rhodoferax ferrireducens).